Here is an 882-residue protein sequence, read N- to C-terminus: Chondroitin sulfate synthase 3 (882 aa).

Residues methionine 1–arginine 7 lie on the Cytoplasmic side of the membrane. Residues proline 8–alanine 28 traverse the membrane as a helical; Signal-anchor for type II membrane protein segment. Topologically, residues proline 29–serine 882 are lumenal. Residues serine 46 to alanine 167 form a disordered region. Low complexity-rich tracts occupy residues alanine 59–arginine 69 and glycine 120–glutamate 131. 3 N-linked (GlcNAc...) asparagine glycosylation sites follow: asparagine 155, asparagine 279, and asparagine 710. 2 residues coordinate a divalent metal cation: aspartate 720 and histidine 834. An N-linked (GlcNAc...) asparagine glycan is attached at asparagine 878.

The protein belongs to the chondroitin N-acetylgalactosaminyltransferase family. The cofactor is Co(2+). Requires Mn(2+) as cofactor. It depends on Cd(2+) as a cofactor. As to expression, detected at low levels in brain, cerebral cortex, uterus and small intestine.

The protein localises to the golgi apparatus. The protein resides in the golgi stack membrane. The enzyme catalyses 3-O-(beta-D-GlcA-(1-&gt;3)-beta-D-GalNAc-(1-&gt;4)-beta-D-GlcA-(1-&gt;3)-beta-D-Gal-(1-&gt;3)-beta-D-Gal-(1-&gt;4)-beta-D-Xyl)-L-seryl-[protein] + UDP-N-acetyl-alpha-D-galactosamine = 3-O-(beta-D-GalNAc-(1-&gt;4)-beta-D-GlcA-(1-&gt;3)-beta-D-GalNAc-(1-&gt;4)-beta-D-GlcA-(1-&gt;3)-beta-D-Gal-(1-&gt;3)-beta-D-Gal-(1-&gt;4)-beta-D-Xyl)-L-seryl-[protein] + UDP + H(+). It carries out the reaction 3-O-{beta-D-GlcA-(1-&gt;3)-[beta-D-GalNAc-(1-&gt;4)-beta-D-GlcA-(1-&gt;3)](n)-beta-D-GalNAc-(1-&gt;4)-beta-D-GlcA-(1-&gt;3)-beta-D-Gal-(1-&gt;3)-beta-D-Gal-(1-&gt;4)-beta-D-Xyl}-L-seryl-[protein] + UDP-N-acetyl-alpha-D-galactosamine = 3-O-{[beta-D-GalNAc-(1-&gt;4)-beta-D-GlcA-(1-&gt;3)](n+1)-beta-D-GalNAc-(1-&gt;4)-beta-D-GlcA-(1-&gt;3)-beta-D-Gal-(1-&gt;3)-beta-D-Gal-(1-&gt;4)-beta-D-Xyl}-L-seryl-[protein] + UDP + H(+). The catalysed reaction is 3-O-(beta-D-GalNAc-(1-&gt;4)-beta-D-GlcA-(1-&gt;3)-beta-D-Gal-(1-&gt;3)-beta-D-Gal-(1-&gt;4)-beta-D-Xyl)-L-seryl-[protein] + UDP-alpha-D-glucuronate = 3-O-(beta-D-GlcA-(1-&gt;3)-beta-D-GalNAc-(1-&gt;4)-beta-D-GlcA-(1-&gt;3)-beta-D-Gal-(1-&gt;3)-beta-D-Gal-(1-&gt;4)-beta-D-Xyl)-L-seryl-[protein] + UDP + H(+). It catalyses the reaction 3-O-{[beta-D-GalNAc-(1-&gt;4)-beta-D-GlcA-(1-&gt;3)](n)-beta-D-GalNAc-(1-&gt;4)-beta-D-GlcA-(1-&gt;3)-beta-D-Gal-(1-&gt;3)-beta-D-Gal-(1-&gt;4)-beta-D-Xyl}-L-seryl-[protein] + UDP-alpha-D-glucuronate = 3-O-{beta-D-GlcA-(1-&gt;3)-[beta-D-GalNAc-(1-&gt;4)-beta-D-GlcA-(1-&gt;3)](n)-beta-D-GalNAc-(1-&gt;4)-beta-D-GlcA-(1-&gt;3)-beta-D-Gal-(1-&gt;3)-beta-D-Gal-(1-&gt;4)-beta-D-Xyl}-L-seryl-[protein] + UDP + H(+). Its function is as follows. Has both beta-1,3-glucuronic acid and beta-1,4-N-acetylgalactosamine transferase activity. Transfers glucuronic acid (GlcUA) from UDP-GlcUA and N-acetylgalactosamine (GalNAc) from UDP-GalNAc to the non-reducing end of the elongating chondroitin polymer. Specific activity is much reduced compared to CHSY1. The polypeptide is Chondroitin sulfate synthase 3 (CHSY3) (Homo sapiens (Human)).